The chain runs to 122 residues: Large ribosomal subunit protein bL12 (122 aa).

Belongs to the bacterial ribosomal protein bL12 family. In terms of assembly, homodimer. Part of the ribosomal stalk of the 50S ribosomal subunit. Forms a multimeric L10(L12)X complex, where L10 forms an elongated spine to which 2 to 4 L12 dimers bind in a sequential fashion. Binds GTP-bound translation factors.

In terms of biological role, forms part of the ribosomal stalk which helps the ribosome interact with GTP-bound translation factors. Is thus essential for accurate translation. The protein is Large ribosomal subunit protein bL12 of Stutzerimonas stutzeri (strain A1501) (Pseudomonas stutzeri).